A 193-amino-acid polypeptide reads, in one-letter code: Dual-action ribosomal maturation protein DarP (193 aa).

The segment covering 1 to 10 has biased composition (basic and acidic residues); the sequence is MRGRDEDTGE. Disordered stretches follow at residues 1–20 and 170–193; these read MRGR…SQQR and SQKP…ENDE. A compositionally biased stretch (acidic residues) spans 181 to 193; sequence GLEDEESASENDE.

This sequence belongs to the DarP family.

The protein resides in the cytoplasm. Member of a network of 50S ribosomal subunit biogenesis factors which assembles along the 30S-50S interface, preventing incorrect 23S rRNA structures from forming. Promotes peptidyl transferase center (PTC) maturation. This chain is Dual-action ribosomal maturation protein DarP, found in Xanthomonas campestris pv. campestris (strain 8004).